The sequence spans 220 residues: Small ribosomal subunit protein mS23 (220 aa).

This sequence belongs to the mitochondrion-specific ribosomal protein mS23 family. As to quaternary structure, component of the mitochondrial small ribosomal subunit (mt-SSU). Mature yeast 74S mitochondrial ribosomes consist of a small (37S) and a large (54S) subunit. The 37S small subunit contains a 15S ribosomal RNA (15S mt-rRNA) and at least 32 different proteins. The 54S large subunit contains a 21S rRNA (21S mt-rRNA) and at least 45 different proteins.

It is found in the mitochondrion. Its function is as follows. Component of the mitochondrial ribosome (mitoribosome), a dedicated translation machinery responsible for the synthesis of mitochondrial genome-encoded proteins, including at least some of the essential transmembrane subunits of the mitochondrial respiratory chain. The mitoribosomes are attached to the mitochondrial inner membrane and translation products are cotranslationally integrated into the membrane. The sequence is that of Small ribosomal subunit protein mS23 (rsm25) from Schizosaccharomyces pombe (strain 972 / ATCC 24843) (Fission yeast).